Reading from the N-terminus, the 347-residue chain is Lipoyl synthase (347 aa).

[4Fe-4S] cluster is bound by residues Cys-55, Cys-60, Cys-66, Cys-81, Cys-85, Cys-88, and Ser-292. In terms of domain architecture, Radical SAM core spans 67 to 281 (WEDREASFLI…SEAAYDMGFP (215 aa)).

It belongs to the radical SAM superfamily. Lipoyl synthase family. Requires [4Fe-4S] cluster as cofactor.

It is found in the cytoplasm. The catalysed reaction is [[Fe-S] cluster scaffold protein carrying a second [4Fe-4S](2+) cluster] + N(6)-octanoyl-L-lysyl-[protein] + 2 oxidized [2Fe-2S]-[ferredoxin] + 2 S-adenosyl-L-methionine + 4 H(+) = [[Fe-S] cluster scaffold protein] + N(6)-[(R)-dihydrolipoyl]-L-lysyl-[protein] + 4 Fe(3+) + 2 hydrogen sulfide + 2 5'-deoxyadenosine + 2 L-methionine + 2 reduced [2Fe-2S]-[ferredoxin]. The protein operates within protein modification; protein lipoylation via endogenous pathway; protein N(6)-(lipoyl)lysine from octanoyl-[acyl-carrier-protein]: step 2/2. In terms of biological role, catalyzes the radical-mediated insertion of two sulfur atoms into the C-6 and C-8 positions of the octanoyl moiety bound to the lipoyl domains of lipoate-dependent enzymes, thereby converting the octanoylated domains into lipoylated derivatives. In Corynebacterium urealyticum (strain ATCC 43042 / DSM 7109), this protein is Lipoyl synthase.